Reading from the N-terminus, the 241-residue chain is Aquaporin Z 1 (241 aa).

The helical transmembrane segment at 23–43 (AVFAAAFPELGIGFLGVAFAF) threads the bilayer. The NPA 1 signature appears at 63–65 (NPA). The next 3 helical transmembrane spans lie at 85–105 (IVAQ…ILTG), 129–149 (LLSA…VILG), and 156–176 (PVGF…LISI). An NPA 2 motif is present at residues 184-186 (NPA). Residues 204-224 (WLFWLAPILGGAIGAVVWKIF) form a helical membrane-spanning segment.

The protein belongs to the MIP/aquaporin (TC 1.A.8) family. As to quaternary structure, homotetramer.

Its subcellular location is the cell inner membrane. The enzyme catalyses H2O(in) = H2O(out). Channel that permits osmotically driven movement of water in both directions. It is involved in the osmoregulation and in the maintenance of cell turgor during volume expansion in rapidly growing cells. It mediates rapid entry or exit of water in response to abrupt changes in osmolarity. This Agrobacterium fabrum (strain C58 / ATCC 33970) (Agrobacterium tumefaciens (strain C58)) protein is Aquaporin Z 1.